Reading from the N-terminus, the 452-residue chain is Probable pectate lyase 9 (452 aa).

The first 25 residues, 1–25 (MATSSLKLTSACFVLLFIFVGCVLT), serve as a signal peptide directing secretion. N88, N139, N214, and N233 each carry an N-linked (GlcNAc...) asparagine glycan. D250 contacts Ca(2+). N-linked (GlcNAc...) asparagine glycosylation is present at N271. 2 residues coordinate Ca(2+): D274 and D278. Residues N281 and N305 are each glycosylated (N-linked (GlcNAc...) asparagine). The active site involves R330. N-linked (GlcNAc...) asparagine glycosylation occurs at N374.

It belongs to the polysaccharide lyase 1 family. Ca(2+) serves as cofactor.

The catalysed reaction is Eliminative cleavage of (1-&gt;4)-alpha-D-galacturonan to give oligosaccharides with 4-deoxy-alpha-D-galact-4-enuronosyl groups at their non-reducing ends.. It participates in glycan metabolism; pectin degradation; 2-dehydro-3-deoxy-D-gluconate from pectin: step 2/5. The sequence is that of Probable pectate lyase 9 from Arabidopsis thaliana (Mouse-ear cress).